A 578-amino-acid chain; its full sequence is Isocitrate dehydrogenase kinase/phosphatase (578 aa).

Residues 315 to 321 (APGIRGM) and lysine 336 each bind ATP. The active site involves aspartate 371.

It belongs to the AceK family.

Its subcellular location is the cytoplasm. It carries out the reaction L-seryl-[isocitrate dehydrogenase] + ATP = O-phospho-L-seryl-[isocitrate dehydrogenase] + ADP + H(+). Bifunctional enzyme which can phosphorylate or dephosphorylate isocitrate dehydrogenase (IDH) on a specific serine residue. This is a regulatory mechanism which enables bacteria to bypass the Krebs cycle via the glyoxylate shunt in response to the source of carbon. When bacteria are grown on glucose, IDH is fully active and unphosphorylated, but when grown on acetate or ethanol, the activity of IDH declines drastically concomitant with its phosphorylation. In Shigella dysenteriae serotype 1 (strain Sd197), this protein is Isocitrate dehydrogenase kinase/phosphatase.